The sequence spans 433 residues: Enolase (433 aa).

Residue Gln167 coordinates (2R)-2-phosphoglycerate. The active-site Proton donor is the Glu209. Asp246, Glu291, and Asp318 together coordinate Mg(2+). 4 residues coordinate (2R)-2-phosphoglycerate: Lys343, Arg372, Ser373, and Lys394. Residue Lys343 is the Proton acceptor of the active site.

The protein belongs to the enolase family. As to quaternary structure, component of the RNA degradosome, a multiprotein complex involved in RNA processing and mRNA degradation. The cofactor is Mg(2+).

It is found in the cytoplasm. The protein resides in the secreted. It localises to the cell surface. The enzyme catalyses (2R)-2-phosphoglycerate = phosphoenolpyruvate + H2O. It functions in the pathway carbohydrate degradation; glycolysis; pyruvate from D-glyceraldehyde 3-phosphate: step 4/5. Catalyzes the reversible conversion of 2-phosphoglycerate (2-PG) into phosphoenolpyruvate (PEP). It is essential for the degradation of carbohydrates via glycolysis. The polypeptide is Enolase (Haemophilus ducreyi (strain 35000HP / ATCC 700724)).